The following is a 218-amino-acid chain: MRITLGSRNPEDRRSSFLHMTASAAATSDSDLNTFADWLEGYYSNRAQAMAEPVWFVPVSLWYVRLPHLFSEGIGFFTEQFNEHTPGRFYRSRVLQVLADPLRIENYKLRDQAAWAGASQDLQRLAQLSLSDLQHLPGCRILVEKRADCYHGQMLPGGGCRLNPGDSTYIHIEFDLTAQEFITWDRGFDATTGQQTWGSRAGPYRYQKRIPVVFPPRP.

It belongs to the CpcT/CpeT biliprotein lyase family.

Covalently attaches a chromophore to Cys residue(s) of phycobiliproteins. The sequence is that of Chromophore lyase CpcT/CpeT 1 from Synechococcus sp. (strain JA-3-3Ab) (Cyanobacteria bacterium Yellowstone A-Prime).